A 957-amino-acid polypeptide reads, in one-letter code: Receptor-like protein 53 (957 aa).

Residues 1–30 form the signal peptide; that stretch reads MEGFWNSKSIIRITLSFIFLFICHFLDVLA. The Extracellular portion of the chain corresponds to 31–910; it reads APTRNLCRPE…EEEDEDLISW (880 aa). N78, N114, N143, N167, and N191 each carry an N-linked (GlcNAc...) asparagine glycan. 12 LRR repeats span residues 120-143, 144-170, 172-192, 193-216, 217-240, 241-266, 268-287, 288-312, 313-336, 338-360, 361-384, and 386-409; these read LHFL…SIEN, LSHL…NLSR, TYLN…ICNL, SHLT…IGGL, SHLT…IGNL, SNLT…NLSQ, TFLG…SFGN, LNQL…LLNL, TGLS…ITSL, NLMD…LFTI, PSLT…NISS, and SNLY…ISKL. N239, N242, N252, and N263 each carry an N-linked (GlcNAc...) asparagine glycan. 2 N-linked (GlcNAc...) asparagine glycosylation sites follow: N311 and N332. N-linked (GlcNAc...) asparagine glycosylation occurs at N381. An LRR 13; degenerate repeat occupies 412–433; that stretch reads LFRLDISHLNTQGPVDFSIFSH. LRR repeat units lie at residues 434–458, 460–483, 486–509, 510–533, 535–556, 558–580, 581–604, 605–629, 631–651, 652–674, 675–697, 698–721, 765–789, 790–813, 814–837, and 839–862; these read LKSL…YFLS, FKRL…SVSD, SQLI…VRTQ, HELG…LWRL, ILYY…SKPE, SLLY…ICGL, RSLN…MGHL, KSTL…IFEI, RSLD…LSFF, STLE…WLSS, LPKL…EATF, PELR…YFVK, LTIY…IGLL, KELL…MGNL, TALE…LGDL, and FLAY…QFLT. 3 N-linked (GlcNAc...) asparagine glycosylation sites follow: N441, N446, and N477. 2 N-linked (GlcNAc...) asparagine glycosylation sites follow: N540 and N543. N594 carries an N-linked (GlcNAc...) asparagine glycan. N665 is a glycosylation site (N-linked (GlcNAc...) asparagine). N711 is a glycosylation site (N-linked (GlcNAc...) asparagine). The N-linked (GlcNAc...) asparagine glycan is linked to N812. Residues N844 and N864 are each glycosylated (N-linked (GlcNAc...) asparagine). A helical transmembrane segment spans residues 911 to 931; that stretch reads IAAAIGFGPGIAFGLMFGYIL. Residues 932 to 957 lie on the Cytoplasmic side of the membrane; sequence VSYKPEWFMNPFDRNNRRQKRHKTTH.

This sequence belongs to the RLP family.

Its subcellular location is the cell membrane. In Arabidopsis thaliana (Mouse-ear cress), this protein is Receptor-like protein 53.